Consider the following 114-residue polypeptide: Large ribosomal subunit protein bL17 (114 aa).

This sequence belongs to the bacterial ribosomal protein bL17 family. Part of the 50S ribosomal subunit. Contacts protein L32.

This Clostridium acetobutylicum (strain ATCC 824 / DSM 792 / JCM 1419 / IAM 19013 / LMG 5710 / NBRC 13948 / NRRL B-527 / VKM B-1787 / 2291 / W) protein is Large ribosomal subunit protein bL17.